The following is a 500-amino-acid chain: MKIYGEKKIWFVTGSQHLYGPGVLAQVAENSQAIAAGLTASEHVSANIESRGVVTTPKEILDVCQAANSDENCVGLILWMHTFSPAKMWIAGLSALNKPYMHLHTQFGAALPWGDINMNYMNLNQSAHGDREFGYIGTRLRQERKVVVGHWQKESVQIQVDDWVRAAMGWAESQTLKVARFGDNMRQVAVTEGDKVSAQIQFGYEVHAFGLGDLAKACEKITAEQITAQLELYKQDYEIDADVFTDVHSLEMLQNEARLELGMEAFLEEGNFKAFTNCFENLTGLSGLPGLATQRLMSKGYGYGGEGDWKTAAMCRIVKVMSLGKAAGTSFMEDYTYNFGDPDQVLGAHMLEVCPSISNEKPKVVVERHTIGIKKDIARLIFTGTPGPAINISTIDMGTRFRIIANEVDTVKPPQDLPNLPVAKALWEPRPSLEVAAAAWIHAGGAHHSVYTQGINLDQLNDFAEMAGVEMVVIGADTNVNEFKKELRFNAVYYHLSHGI.

Mn(2+) contacts are provided by Glu-306, Glu-333, His-349, and His-448.

Belongs to the arabinose isomerase family. Requires Mn(2+) as cofactor.

It carries out the reaction beta-L-arabinopyranose = L-ribulose. It functions in the pathway carbohydrate degradation; L-arabinose degradation via L-ribulose; D-xylulose 5-phosphate from L-arabinose (bacterial route): step 1/3. Catalyzes the conversion of L-arabinose to L-ribulose. The polypeptide is L-arabinose isomerase (Saccharophagus degradans (strain 2-40 / ATCC 43961 / DSM 17024)).